Consider the following 289-residue polypeptide: Probable endonuclease 4 (289 aa).

Residues histidine 76, histidine 116, glutamate 152, aspartate 186, histidine 189, histidine 220, aspartate 233, histidine 235, and glutamate 265 each coordinate Zn(2+).

This sequence belongs to the AP endonuclease 2 family. The cofactor is Zn(2+).

The catalysed reaction is Endonucleolytic cleavage to 5'-phosphooligonucleotide end-products.. Functionally, endonuclease IV plays a role in DNA repair. It cleaves phosphodiester bonds at apurinic or apyrimidinic (AP) sites, generating a 3'-hydroxyl group and a 5'-terminal sugar phosphate. This Malacoplasma penetrans (strain HF-2) (Mycoplasma penetrans) protein is Probable endonuclease 4.